The following is a 324-amino-acid chain: MALMTMVQALNRALDEEMAKDPRVVVLGEDVGKRGGVFLVTEGLLQKYGPDRVMDTPLSEAAIVGAALGMAAHGLRPVAEIQFADYIFPGFDQLVSQVAKLRYRSGGQFTAPLVVRMPSGGGVRGGHHHSQSPEAHFVHTAGLKVVAVSTPYDAKGLLKAAIRDEDPVVFLEPKRLYRSVKEEVPEEDYTLSIGKAALRREGKDLTLIGYGTVMPEVLQAAAELAKAGVSAEVLDLRTLMPWDYEAVMNSVAKTGRVVLVSDAPRHASFVSEVAATIAEDLLDMLLAPPIRVTGFDTPYPYAQDKLYLPTVTRILNAAKRALDY.

Thiamine diphosphate contacts are provided by residues Glu29, Leu58–Glu60, Gln82, and Tyr86–Pro89. Residues Phe83–Tyr86 and His129 each bind substrate. His129 serves as the catalytic Proton acceptor.

Heterotetramer of two alpha and two beta chains. Directly associated with ODBA in the E1 complex. Requires thiamine diphosphate as cofactor.

The enzyme catalyses N(6)-[(R)-lipoyl]-L-lysyl-[protein] + 3-methyl-2-oxobutanoate + H(+) = N(6)-[(R)-S(8)-2-methylpropanoyldihydrolipoyl]-L-lysyl-[protein] + CO2. The branched-chain alpha-keto dehydrogenase complex catalyzes the overall conversion of alpha-keto acids to acyl-CoA and CO(2). It contains multiple copies of three enzymatic components: branched-chain alpha-keto acid decarboxylase (E1), lipoamide acyltransferase (E2) and lipoamide dehydrogenase (E3). This Thermus thermophilus (strain ATCC BAA-163 / DSM 7039 / HB27) protein is 2-oxoisovalerate dehydrogenase subunit beta.